A 306-amino-acid chain; its full sequence is Agmatinase (306 aa).

Residues His126, Asp149, His151, Asp153, Asp230, and Asp232 each coordinate Mn(2+).

Belongs to the arginase family. Agmatinase subfamily. Requires Mn(2+) as cofactor.

It carries out the reaction agmatine + H2O = urea + putrescine. The protein operates within amine and polyamine biosynthesis; putrescine biosynthesis via agmatine pathway; putrescine from agmatine: step 1/1. Functionally, catalyzes the formation of putrescine from agmatine. The sequence is that of Agmatinase from Cronobacter sakazakii (strain ATCC BAA-894) (Enterobacter sakazakii).